A 617-amino-acid chain; its full sequence is MPKYRSFTTTHGRNMSGARSLWRATGMTDEDFKKPIIAIVNSFSQFVPGHIHLQEVGKIISKEIKKYGGVPKEFNTIAIDDGIAMGHSGMLYSLPSRELIADSIEYVINAHCVDSMICVSNCDKITPAMFMASLRLNIPSVFVSGGPMEAGKIKTKDKTKKIDLVDAIIHGGDSNKSDDFIREIELSACPTCGSCSGMFTANSMNCLIEAIGLSLPGNGTLLATHIDRKKLFKKSARNIVKITKDYYLNNNKNVLPRNIANKESFENAMALDIAMGGSTNTILHLLAAAYEGKVDFKMSDINNLSKKIPHICKVAPSTNLYHVEDVHRAGGVMRILGELNRSNLLNKKTENILGLNLEKTLKKYDILSTKNKNVIKMFHAGPGGNRTIKPFSQNYRWNKLDKDRVNGCIRSHENAYSKNGGLSVLYGNLAKNGCIIKTASIDKKHYIFSGPAKVYESQEEAVSAILSGKIIAGDVIVIRYEGPKGGPGMQEMLYPTTYLKSINLDKQCALITDGRFSGGTSGLSIGHISPEAANKGIIALVENGDDIQINIVNKTIHLNITEKELNLRIIKENAKGLKAYKPLNRKRNISFALRAYAHFALSADKGAIRNKKKLFNF.

Residue aspartate 81 participates in Mg(2+) binding. Cysteine 122 is a [2Fe-2S] cluster binding site. Mg(2+) is bound by residues aspartate 123 and lysine 124. Lysine 124 carries the N6-carboxylysine modification. Residue cysteine 195 coordinates [2Fe-2S] cluster. Glutamate 491 contributes to the Mg(2+) binding site. The Proton acceptor role is filled by serine 517.

The protein belongs to the IlvD/Edd family. As to quaternary structure, homodimer. The cofactor is [2Fe-2S] cluster. It depends on Mg(2+) as a cofactor.

The catalysed reaction is (2R)-2,3-dihydroxy-3-methylbutanoate = 3-methyl-2-oxobutanoate + H2O. It carries out the reaction (2R,3R)-2,3-dihydroxy-3-methylpentanoate = (S)-3-methyl-2-oxopentanoate + H2O. It functions in the pathway amino-acid biosynthesis; L-isoleucine biosynthesis; L-isoleucine from 2-oxobutanoate: step 3/4. The protein operates within amino-acid biosynthesis; L-valine biosynthesis; L-valine from pyruvate: step 3/4. Functionally, functions in the biosynthesis of branched-chain amino acids. Catalyzes the dehydration of (2R,3R)-2,3-dihydroxy-3-methylpentanoate (2,3-dihydroxy-3-methylvalerate) into 2-oxo-3-methylpentanoate (2-oxo-3-methylvalerate) and of (2R)-2,3-dihydroxy-3-methylbutanoate (2,3-dihydroxyisovalerate) into 2-oxo-3-methylbutanoate (2-oxoisovalerate), the penultimate precursor to L-isoleucine and L-valine, respectively. This is Dihydroxy-acid dehydratase from Buchnera aphidicola subsp. Schizaphis graminum (strain Sg).